Here is a 201-residue protein sequence, read N- to C-terminus: 3-isopropylmalate dehydratase small subunit (201 aa).

The protein belongs to the LeuD family. LeuD type 1 subfamily. In terms of assembly, heterodimer of LeuC and LeuD.

It carries out the reaction (2R,3S)-3-isopropylmalate = (2S)-2-isopropylmalate. The protein operates within amino-acid biosynthesis; L-leucine biosynthesis; L-leucine from 3-methyl-2-oxobutanoate: step 2/4. Functionally, catalyzes the isomerization between 2-isopropylmalate and 3-isopropylmalate, via the formation of 2-isopropylmaleate. The protein is 3-isopropylmalate dehydratase small subunit of Salmonella paratyphi A (strain ATCC 9150 / SARB42).